A 698-amino-acid chain; its full sequence is Elongation factor G 1 (698 aa).

A tr-type G domain is found at 8–290 (ERYRNIGIVA…AVVDYLPAPI (283 aa)). GTP-binding positions include 17 to 24 (AHVDAGKT), 88 to 92 (DTPGH), and 142 to 145 (NKMD).

It belongs to the TRAFAC class translation factor GTPase superfamily. Classic translation factor GTPase family. EF-G/EF-2 subfamily.

The protein resides in the cytoplasm. Catalyzes the GTP-dependent ribosomal translocation step during translation elongation. During this step, the ribosome changes from the pre-translocational (PRE) to the post-translocational (POST) state as the newly formed A-site-bound peptidyl-tRNA and P-site-bound deacylated tRNA move to the P and E sites, respectively. Catalyzes the coordinated movement of the two tRNA molecules, the mRNA and conformational changes in the ribosome. This Shewanella denitrificans (strain OS217 / ATCC BAA-1090 / DSM 15013) protein is Elongation factor G 1.